The sequence spans 360 residues: Phospho-N-acetylmuramoyl-pentapeptide-transferase (360 aa).

Helical transmembrane passes span 27-47 (GALITAAFIVFLFGPAIISSL), 70-90 (GTPTMGGLMIFSGILGSSILW), 93-113 (LSSVYVWVVLMVMVGFGAIGF), 134-154 (LALEFVIAGFAAWIIMSAGQE), 168-188 (LLLNLGIFFIPFAAFVIVGAG), 205-225 (VMVAAASFGVIAYLSGNAIFA), 239-259 (LSVILGAVIGAGLGFLWFNAP), 262-282 (AIFMGDTGSLALGGLIGTVAV), 288-308 (IVLAIIGGLFVIEILSVIIQV), and 337-357 (QVVIRFWIIAVVLALIGLSTL).

The protein belongs to the glycosyltransferase 4 family. MraY subfamily. Requires Mg(2+) as cofactor.

The protein resides in the cell inner membrane. The catalysed reaction is UDP-N-acetyl-alpha-D-muramoyl-L-alanyl-gamma-D-glutamyl-meso-2,6-diaminopimeloyl-D-alanyl-D-alanine + di-trans,octa-cis-undecaprenyl phosphate = di-trans,octa-cis-undecaprenyl diphospho-N-acetyl-alpha-D-muramoyl-L-alanyl-D-glutamyl-meso-2,6-diaminopimeloyl-D-alanyl-D-alanine + UMP. It participates in cell wall biogenesis; peptidoglycan biosynthesis. Catalyzes the initial step of the lipid cycle reactions in the biosynthesis of the cell wall peptidoglycan: transfers peptidoglycan precursor phospho-MurNAc-pentapeptide from UDP-MurNAc-pentapeptide onto the lipid carrier undecaprenyl phosphate, yielding undecaprenyl-pyrophosphoryl-MurNAc-pentapeptide, known as lipid I. This is Phospho-N-acetylmuramoyl-pentapeptide-transferase from Chelativorans sp. (strain BNC1).